We begin with the raw amino-acid sequence, 308 residues long: Probable acetylxylan esterase A (308 aa).

The N-terminal stretch at 1-19 (MAPFSFLLTLLLYTLSAGA) is a signal peptide. N141 carries N-linked (GlcNAc...) asparagine glycosylation. The active-site Charge relay system is the S151. N-linked (GlcNAc...) asparagine glycosylation is present at N193.

Belongs to the carbohydrate esterase 1 (CE1) family. AxeA subfamily. As to quaternary structure, monomer.

The protein resides in the secreted. It carries out the reaction Deacetylation of xylans and xylo-oligosaccharides.. It participates in glycan degradation; xylan degradation. Functionally, acetylxylan esterase involved in the hydrolysis of xylan, a major structural heterogeneous polysaccharide found in plant biomass representing the second most abundant polysaccharide in the biosphere, after cellulose. Degrades acetylated xylans by cleaving acetyl side groups from the hetero-xylan backbone. This is Probable acetylxylan esterase A (axeA) from Aspergillus clavatus (strain ATCC 1007 / CBS 513.65 / DSM 816 / NCTC 3887 / NRRL 1 / QM 1276 / 107).